The chain runs to 207 residues: Protein dct-5 (207 aa).

The chain crosses the membrane as a helical span at residues 13 to 33; it reads LNFILSIMNSYLFVLIVSIGF.

It is found in the membrane. Functionally, acts downstream of daf-16/foxo to suppress tumors induced by disruption of gld-1. Potentially a direct target of daf-15/foxo. The chain is Protein dct-5 (dct-5) from Caenorhabditis elegans.